The sequence spans 134 residues: Methylglyoxal synthase (134 aa).

Residues 1 to 134 (MHIALIAHDE…DWRDLRRNDE (134 aa)) form the MGS-like domain. Residues H8, K12, 34 to 37 (TGTT), and 54 to 55 (SG) each bind substrate. The Proton donor/acceptor role is filled by D60. Substrate is bound at residue H87.

It belongs to the methylglyoxal synthase family.

The enzyme catalyses dihydroxyacetone phosphate = methylglyoxal + phosphate. Catalyzes the formation of methylglyoxal from dihydroxyacetone phosphate. This chain is Methylglyoxal synthase, found in Listeria monocytogenes serotype 4b (strain CLIP80459).